Reading from the N-terminus, the 1413-residue chain is DNA-directed RNA polymerase subunit beta' (1413 aa).

Zn(2+) contacts are provided by cysteine 72, cysteine 74, cysteine 87, and cysteine 90. Mg(2+)-binding residues include aspartate 463, aspartate 465, and aspartate 467. Cysteine 811, cysteine 885, cysteine 892, and cysteine 895 together coordinate Zn(2+).

Belongs to the RNA polymerase beta' chain family. As to quaternary structure, the RNAP catalytic core consists of 2 alpha, 1 beta, 1 beta' and 1 omega subunit. When a sigma factor is associated with the core the holoenzyme is formed, which can initiate transcription. Mg(2+) is required as a cofactor. Zn(2+) serves as cofactor.

It carries out the reaction RNA(n) + a ribonucleoside 5'-triphosphate = RNA(n+1) + diphosphate. In terms of biological role, DNA-dependent RNA polymerase catalyzes the transcription of DNA into RNA using the four ribonucleoside triphosphates as substrates. This chain is DNA-directed RNA polymerase subunit beta', found in Ruegeria pomeroyi (strain ATCC 700808 / DSM 15171 / DSS-3) (Silicibacter pomeroyi).